A 461-amino-acid polypeptide reads, in one-letter code: Steroidogenic factor 1 (461 aa).

The nuclear receptor DNA-binding region spans 10-85; sequence DELCPVCGDK…VGMRLEAVRA (76 aa). The segment at 13–33 adopts an NR C4-type zinc-finger fold; that stretch reads CPVCGDKVSGYHYGLLTCESC. Lys-34, Lys-38, and Lys-72 each carry N6-acetyllysine. The NR C4-type zinc-finger motif lies at 49 to 73; it reads CTESQSCKIDKTQRKRCPFCRFQKC. Lys-119 is covalently cross-linked (Glycyl lysine isopeptide (Lys-Gly) (interchain with G-Cter in SUMO)). The segment at 119-157 is disordered; sequence KLETGPPMGVPPPPPPAPDYVLPPSLHGPEPKGLAAGPP. The span at 126 to 136 shows a compositional bias: pro residues; that stretch reads MGVPPPPPPAP. A Glycyl lysine isopeptide (Lys-Gly) (interchain with G-Cter in SUMO) cross-link involves residue Lys-194. Ser-203 is subject to Phosphoserine; by CDK7. Residues 222–459 form the NR LBD domain; that stretch reads NVPELILQLL…NLLIEMLQAK (238 aa). The tract at residues 230–461 is important for dimerization; that stretch reads LLQLEPDEDQ…LIEMLQAKQT (232 aa). A 1,2-diacyl-sn-glycero-3-phosphocholine contacts are provided by Gly-341, Tyr-436, and Lys-440. A 1,2-diacylglycero-3-phosphoethanolamine is bound by residues Gly-341, Tyr-436, and Lys-440.

The protein belongs to the nuclear hormone receptor family. NR5 subfamily. In terms of assembly, binds DNA as a monomer. Interacts with NR0B2 and PPARGC1A. Part of a complex consisting of SFPQ, NONO and NR5A1. Interacts with NCOA2. Interacts with DGKQ and CDK7. Binds to and activated by HIPK3. Acetylation stimulates the transcriptional activity. In terms of processing, sumoylation reduces CDK7-mediated phosphorylation on Ser-203. Post-translationally, phosphorylated on Ser-203 by CDK7. This phosphorylation promotes transcriptional activity. In terms of tissue distribution, high expressed in the adrenal cortex, the ovary, the testis, and the spleen.

It localises to the nucleus. Transcriptional activator. Essential for sexual differentiation and formation of the primary steroidogenic tissues. Binds to the Ad4 site found in the promoter region of steroidogenic P450 genes such as CYP11A, CYP11B and CYP21B. Also regulates the AMH/Muellerian inhibiting substance gene as well as the AHCH and STAR genes. 5'-YCAAGGYC-3' and 5'-RRAGGTCA-3' are the consensus sequences for the recognition by NR5A1. The SFPQ-NONO-NR5A1 complex binds to the CYP17 promoter and regulates basal and cAMP-dependent transcriptional activity. Binds phosphatidylcholine. Binds phospholipids with a phosphatidylinositol (PI) headgroup, in particular PI(3,4)P2 and PI(3,4,5)P3. Activated by the phosphorylation of NR5A1 by HIPK3 leading to increased steroidogenic gene expression upon cAMP signaling pathway stimulation. In Homo sapiens (Human), this protein is Steroidogenic factor 1 (NR5A1).